The chain runs to 236 residues: Octanoyltransferase (236 aa).

Positions 36-220 constitute a BPL/LPL catalytic domain; that stretch reads DQVPDTVLLL…HLAAVLGASS (185 aa). Residues 76-83, 150-152, and 163-165 contribute to the substrate site; these read RGGKITWH, AIG, and GFA. Cys181 acts as the Acyl-thioester intermediate in catalysis.

Belongs to the LipB family.

It localises to the cytoplasm. The enzyme catalyses octanoyl-[ACP] + L-lysyl-[protein] = N(6)-octanoyl-L-lysyl-[protein] + holo-[ACP] + H(+). The protein operates within protein modification; protein lipoylation via endogenous pathway; protein N(6)-(lipoyl)lysine from octanoyl-[acyl-carrier-protein]: step 1/2. Functionally, catalyzes the transfer of endogenously produced octanoic acid from octanoyl-acyl-carrier-protein onto the lipoyl domains of lipoate-dependent enzymes. Lipoyl-ACP can also act as a substrate although octanoyl-ACP is likely to be the physiological substrate. This is Octanoyltransferase from Thermobifida fusca (strain YX).